A 240-amino-acid polypeptide reads, in one-letter code: Ubiquitin domain-containing protein 2 (240 aa).

A disordered region spans residues 1–48 (MGGCVGSHHDSSGSLNENSDGTGVALGRNQPLKREKPKWKSDYPMTDG). Polar residues predominate over residues 12–21 (SGSLNENSDG). Residues 32–41 (LKREKPKWKS) show a composition bias toward basic and acidic residues. The Ubiquitin-like domain occupies 152-227 (CQLRLRLSTG…VQVIVSQPPT (76 aa)).

The protein localises to the cytoplasm. This is Ubiquitin domain-containing protein 2 (ubtd2) from Danio rerio (Zebrafish).